The primary structure comprises 778 residues: Endonuclease MutS2 (778 aa).

328-335 (GPNTGGKT) serves as a coordination point for ATP. The region spanning 702-777 (LDLRGKRYEE…GSGATIVTFK (76 aa)) is the Smr domain.

Belongs to the DNA mismatch repair MutS family. MutS2 subfamily. Homodimer. Binds to stalled ribosomes, contacting rRNA.

Endonuclease that is involved in the suppression of homologous recombination and thus may have a key role in the control of bacterial genetic diversity. In terms of biological role, acts as a ribosome collision sensor, splitting the ribosome into its 2 subunits. Detects stalled/collided 70S ribosomes which it binds and splits by an ATP-hydrolysis driven conformational change. Acts upstream of the ribosome quality control system (RQC), a ribosome-associated complex that mediates the extraction of incompletely synthesized nascent chains from stalled ribosomes and their subsequent degradation. Probably generates substrates for RQC. This chain is Endonuclease MutS2, found in Streptococcus pneumoniae (strain 70585).